Consider the following 60-residue polypeptide: Photosystem II reaction center protein L (60 aa).

Residues 39 to 59 (SLYWGLLLIFVLAVLFSSYIF) traverse the membrane as a helical segment.

Belongs to the PsbL family. PSII is composed of 1 copy each of membrane proteins PsbA, PsbB, PsbC, PsbD, PsbE, PsbF, PsbH, PsbI, PsbJ, PsbK, PsbL, PsbM, PsbT, PsbX, PsbY, PsbZ, Psb30/Ycf12, at least 3 peripheral proteins of the oxygen-evolving complex and a large number of cofactors. It forms dimeric complexes.

The protein localises to the plastid. The protein resides in the chloroplast thylakoid membrane. Functionally, one of the components of the core complex of photosystem II (PSII). PSII is a light-driven water:plastoquinone oxidoreductase that uses light energy to abstract electrons from H(2)O, generating O(2) and a proton gradient subsequently used for ATP formation. It consists of a core antenna complex that captures photons, and an electron transfer chain that converts photonic excitation into a charge separation. This subunit is found at the monomer-monomer interface and is required for correct PSII assembly and/or dimerization. The polypeptide is Photosystem II reaction center protein L (Oedogonium cardiacum (Filamentous green alga)).